A 557-amino-acid polypeptide reads, in one-letter code: Inositol-3-phosphate synthase 1 (557 aa).

Positions 67, 68, 69, 70, 141, 177, 178, 188, 191, 228, 229, 230, 231, 278, 279, 303, 306, 337, 338, 339, and 352 each coordinate NAD(+). Serine 279 carries the post-translational modification Phosphoserine. A Phosphoserine modification is found at serine 357. NAD(+)-binding residues include glycine 390, aspartate 391, aspartate 419, and serine 420. The interval 514–557 (GIKPEEVKATSPLPCKKESTPATNGCTGDANGHTQAPTPELSTA) is disordered. A Phosphoserine modification is found at serine 524. The span at 533-557 (TPATNGCTGDANGHTQAPTPELSTA) shows a compositional bias: polar residues.

Belongs to the myo-inositol 1-phosphate synthase family. In terms of assembly, homotrimer. Requires NAD(+) as cofactor. Post-translationally, phosphorylation at Ser-524 does not appear to affect enzyme activity, and is detected in brain and testis. In terms of tissue distribution, expressed in testis, brain and epididymis (at protein level). Moderately expressed in brain, lung, liver, and kidney. Low expression in heart and spleen. Very low expression in skeletal muscle. As to expression, expressed in testis, spleen, heart, brainstem, hippocampus, cerebellum, cortex and amygdala. Absent or very lowly expressed in intestine, lung and muscle. Expressed in intestine, lung, liver, muscle, testis, spleen, brainstem, hippocampus, cerebellum, cortex and amygdala. Absent or lowly expressed in heart and kidney. In terms of tissue distribution, expressed in intestine (at protein level).

Its subcellular location is the cytoplasm. The enzyme catalyses D-glucose 6-phosphate = 1D-myo-inositol 3-phosphate. It participates in polyol metabolism; myo-inositol biosynthesis; myo-inositol from D-glucose 6-phosphate: step 1/2. Inhibited by 2-deoxyglucitol 6-phosphate (dgtolP) and 2-deoxy-D-glucose 6-phosphate. Inhibited by copper, mercury, cadmium, zinc and copper ions. Activated by potassium and ammonium ions. Its function is as follows. Key enzyme in myo-inositol biosynthesis pathway that catalyzes the conversion of glucose 6-phosphate to 1-myo-inositol 1-phosphate in a NAD-dependent manner. Rate-limiting enzyme in the synthesis of all inositol-containing compounds. Key enzyme in myo-inositol biosynthesis pathway that catalyzes the conversion of glucose 6-phosphate to 1-myo-inositol 1-phosphate in a NAD-dependent manner. In terms of biological role, competitively inhibits the function of isoform 1, presumably by competing for NAD cofactor. The polypeptide is Inositol-3-phosphate synthase 1 (Isyna1) (Rattus norvegicus (Rat)).